The primary structure comprises 555 residues: 4-coumarate--CoA ligase-like 9 (555 aa).

ATP-binding residues include Ser-200, Ser-201, Gly-202, Thr-203, Thr-204, and Lys-208. Tyr-248 serves as a coordination point for (E)-4-coumaroyl-AMP. Position 269 (Arg-269) interacts with CoA. Residues 271–342 form an SBD1 region; it reads DLRTFLRALV…RKFPGVQVEE (72 aa). Ala-320 is a binding site for (E)-4-coumaroyl-AMP. 5 residues coordinate ATP: Glu-342, Ala-343, Thr-347, Asp-431, and Arg-446. (E)-4-coumaroyl-AMP-binding residues include Ala-343 and Thr-347. Residues 343-410 form an SBD2 region; sequence AYGLTEHSCI…VRSQSVMQGY (68 aa). (E)-4-coumaroyl-AMP-binding residues include Lys-448 and Lys-452. Residues Lys-454 and Gly-455 each coordinate CoA. Lys-537 is a binding site for ATP.

Belongs to the ATP-dependent AMP-binding enzyme family. In terms of assembly, interacts with STS1. Mg(2+) serves as cofactor.

It catalyses the reaction (E)-4-coumarate + ATP + CoA = (E)-4-coumaroyl-CoA + AMP + diphosphate. It carries out the reaction (E)-4-coumarate + ATP + H(+) = (E)-4-coumaroyl-AMP + diphosphate. The catalysed reaction is (E)-4-coumaroyl-AMP + CoA = (E)-4-coumaroyl-CoA + AMP + H(+). Its function is as follows. Carboxylate--CoA ligase that may use 4-coumarate as substrate. Follows a two-step reaction mechanism, wherein the carboxylate substrate first undergoes adenylation by ATP, followed by a thioesterification in the presence of CoA to yield the final CoA thioester. The protein is 4-coumarate--CoA ligase-like 9 (4CLL9) of Oryza sativa subsp. japonica (Rice).